Consider the following 64-residue polypeptide: Small ribosomal subunit protein bS21 (64 aa).

The interval 42 to 64 is disordered; the sequence is KKEKEKAAAKKRNKYNKRRSFYY. Positions 50 to 64 are enriched in basic residues; it reads AKKRNKYNKRRSFYY.

It belongs to the bacterial ribosomal protein bS21 family.

This Malacoplasma penetrans (strain HF-2) (Mycoplasma penetrans) protein is Small ribosomal subunit protein bS21.